We begin with the raw amino-acid sequence, 806 residues long: Transitional endoplasmic reticulum ATPase (806 aa).

The residue at position 2 (A2) is an N-acetylalanine. Residues S3 and S7 each carry the phosphoserine modification. K8 participates in a covalent cross-link: Glycyl lysine isopeptide (Lys-Gly) (interchain with G-Cter in SUMO2). S13 is modified (phosphoserine). K18 participates in a covalent cross-link: Glycyl lysine isopeptide (Lys-Gly) (interchain with G-Cter in SUMO2). S37 is modified (phosphoserine). Position 247-253 (247-253) interacts with ATP; the sequence is PGTGKTL. Position 315 is an N6,N6,N6-trimethyllysine; by VCPKMT (K315). Residues N348 and H384 each contribute to the ATP site. T436 is modified (phosphothreonine). Phosphoserine is present on S462. N6-acetyllysine occurs at positions 502 and 505. 521–526 provides a ligand contact to ATP; that stretch reads GCGKTL. The residue at position 668 (K668) is an N6-acetyllysine; alternate. Position 668 is an N6-succinyllysine; alternate (K668). Phosphoserine is present on S702. Positions 708–727 are disordered; sequence RRERERQTNPSAMEVEEDDP. N6-acetyllysine is present on K754. The tract at residues 768-806 is disordered; that stretch reads FGSFRFPSGNQGGAGPSQGSGGGTGGSVYTEDNDDDLYG. S770, S775, and S787 each carry phosphoserine. Positions 777 to 793 are enriched in gly residues; that stretch reads NQGGAGPSQGSGGGTGG. The interaction with UBXN6 stretch occupies residues 797-806; the sequence is TEDNDDDLYG. Residues 802–806 carry the PIM motif motif; it reads DDLYG. A Phosphotyrosine modification is found at Y805.

The protein belongs to the AAA ATPase family. In terms of assembly, homohexamer. Forms a ring-shaped particle of 12.5 nm diameter, that displays 6-fold radial symmetry. Part of a ternary complex containing STX5A, NSFL1C and VCP. NSFL1C forms a homotrimer that binds to one end of a VCP homohexamer. The complex binds to membranes enriched in phosphatidylethanolamine-containing lipids and promotes Golgi membrane fusion. Binds to a heterodimer of NPLOC4 and UFD1, binding to this heterodimer inhibits Golgi-membrane fusion. Interaction with VCIP135 leads to dissociation of the complex via ATP hydrolysis by VCP. Part of a ternary complex containing NPLOC4, UFD1 and VCP. Interacts with NSFL1C-like protein p37; the complex has membrane fusion activity and is required for Golgi and endoplasmic reticulum biogenesis. Interacts with SELENOS and SYVN1, as well as with DERL1 (via SHP-box motif), DERL2 and DERL3; which probably transfer misfolded proteins from the ER to VCP. Interacts with SVIP and forms a complex with SVIP and DERL1. Component of a complex required to couple retrotranslocation, ubiquitination and deglycosylation composed of NGLY1, SAKS1, AMFR, VCP and RAD23B. Part of a complex composed of STUB1/CHIP, VCP/p97, CHRNA3, and UBXN2A that modulates the ubiquitination and endoplasmic reticulum-associated degradation (ERAD) of CHRNA3. Within the complex UBXN2A acts as a scaffold protein required for the interaction of CHRNA3 with VCP/p97, this interaction also inhibits CHRNA3 ubiquitination by STUB1/CHIP and subsequently ERAD. Interacts with UBXN2A (via UBX domain); the interaction is required for the interaction of CHRNA3 in the STUB1-VCP-UBXN2A complex. Directly interacts with UBXN4 and RNF19A. Interacts with CASR. Interacts with UBE4B and YOD1. Interacts with clathrin. Interacts with RNF103. Interacts with TRIM13 and TRIM21. Component of a VCP/p97-AMFR/gp78 complex that participates in the final step of the endoplasmic reticulum-associated degradation (ERAD) of HMGCR. Interacts directly with AMFR/gp78 (via its VIM). Interacts with RHBDD1 (via C-terminal domain). Interacts with SPRTN; leading to recruitment to stalled replication forks. Interacts with WASHC5. Interacts with UBOX5. Interacts (via N-terminus) with UBXN7, UBXN8, and probably several other UBX domain-containing proteins (via UBX domains); the interactions are mutually exclusive with VIM-dependent interactions such as those with AMFR and SELENOS. Forms a complex with UBQLN1 and UBXN4. Interacts (via the PIM motif) with RNF31 (via the PUB domain). Interacts with RIGI and RNF125; interaction takes place when RIGI is ubiquitinated via 'Lys-63'-linked ubiquitin on its CARD domains, leading to recruit RNF125 and promote ubiquitination and degradation of RIGI. Interacts with BAG6. Interacts with UBXN10. Interacts with UBXN6; the interaction with UBXN6 is direct and competitive with UFD1. Forms a ternary complex with CAV1 and UBXN6. Interacts with PLAA, UBXN6 and YOD1; may form a complex involved in macroautophagy. Interacts with ANKZF1. Interacts with ubiquitin-binding protein FAF1. Interacts with ZFAND2B (via VIM motif); the interaction is direct. Interacts with ZFAND1 (via its ubiquitin-like region); this interaction occurs in an arsenite-dependent manner. Interacts with CCDC47. Interacts with UBAC2. Interacts with LMBR1L. Interacts with ATXN3. Interacts with TEX264; bridging VCP to covalent DNA-protein cross-links (DPCs). Interacts with FBXL4. In terms of processing, phosphorylated by tyrosine kinases in response to T-cell antigen receptor activation. Phosphorylated in mitotic cells. Post-translationally, ISGylated. Methylation at Lys-315 catalyzed by VCPKMT is increased in the presence of ASPSCR1. Lys-315 methylation may decrease ATPase activity.

Its subcellular location is the cytoplasm. It is found in the cytosol. It localises to the endoplasmic reticulum. The protein resides in the nucleus. The protein localises to the stress granule. The catalysed reaction is ATP + H2O = ADP + phosphate + H(+). Necessary for the fragmentation of Golgi stacks during mitosis and for their reassembly after mitosis. Involved in the formation of the transitional endoplasmic reticulum (tER). The transfer of membranes from the endoplasmic reticulum to the Golgi apparatus occurs via 50-70 nm transition vesicles which derive from part-rough, part-smooth transitional elements of the endoplasmic reticulum (tER). Vesicle budding from the tER is an ATP-dependent process. The ternary complex containing UFD1, VCP and NPLOC4 binds ubiquitinated proteins and is necessary for the export of misfolded proteins from the ER to the cytoplasm, where they are degraded by the proteasome. The NPLOC4-UFD1-VCP complex regulates spindle disassembly at the end of mitosis and is necessary for the formation of a closed nuclear envelope. Regulates E3 ubiquitin-protein ligase activity of RNF19A. Component of the VCP/p97-AMFR/gp78 complex that participates in the final step of the sterol-mediated ubiquitination and endoplasmic reticulum-associated degradation (ERAD) of HMGCR. Mediates the endoplasmic reticulum-associated degradation of CHRNA3 in cortical neurons as part of the STUB1-VCP-UBXN2A complex. Involved in endoplasmic reticulum stress-induced pre-emptive quality control, a mechanism that selectively attenuates the translocation of newly synthesized proteins into the endoplasmic reticulum and reroutes them to the cytosol for proteasomal degradation. Involved in clearance process by mediating G3BP1 extraction from stress granules. Also involved in DNA damage response: recruited to double-strand breaks (DSBs) sites in a RNF8- and RNF168-dependent manner and promotes the recruitment of TP53BP1 at DNA damage sites. Recruited to stalled replication forks by SPRTN: may act by mediating extraction of DNA polymerase eta (POLH) to prevent excessive translesion DNA synthesis and limit the incidence of mutations induced by DNA damage. Together with SPRTN metalloprotease, involved in the repair of covalent DNA-protein cross-links (DPCs) during DNA synthesis. Involved in interstrand cross-link repair in response to replication stress by mediating unloading of the ubiquitinated CMG helicase complex. Mediates extraction of PARP1 trapped to chromatin: recognizes and binds ubiquitinated PARP1 and promotes its removal. Required for cytoplasmic retrotranslocation of stressed/damaged mitochondrial outer-membrane proteins and their subsequent proteasomal degradation. Essential for the maturation of ubiquitin-containing autophagosomes and the clearance of ubiquitinated protein by autophagy. Acts as a negative regulator of type I interferon production by interacting with RIGI: interaction takes place when RIGI is ubiquitinated via 'Lys-63'-linked ubiquitin on its CARD domains, leading to recruit RNF125 and promote ubiquitination and degradation of RIGI. May play a role in the ubiquitin-dependent sorting of membrane proteins to lysosomes where they undergo degradation. May more particularly play a role in caveolins sorting in cells. By controlling the steady-state expression of the IGF1R receptor, indirectly regulates the insulin-like growth factor receptor signaling pathway. The polypeptide is Transitional endoplasmic reticulum ATPase (VCP) (Homo sapiens (Human)).